The chain runs to 324 residues: Rho crystallin (324 aa).

N-acetylthreonine is present on Thr2. Position 218–281 (218–281 (SVLGSHRDRN…SFTPARIKQN (64 aa))) interacts with NADP(+).

The protein belongs to the aldo/keto reductase family. Monomer.

This chain is Rho crystallin, found in Aquarana catesbeiana (American bullfrog).